The primary structure comprises 121 residues: Glycine cleavage system H protein (121 aa).

The 83-residue stretch at valine 16–lysine 98 folds into the Lipoyl-binding domain. Lysine 57 is modified (N6-lipoyllysine).

Belongs to the GcvH family. In terms of assembly, the glycine cleavage system is composed of four proteins: P, T, L and H. The cofactor is (R)-lipoate.

The glycine cleavage system catalyzes the degradation of glycine. The H protein shuttles the methylamine group of glycine from the P protein to the T protein. The protein is Glycine cleavage system H protein of Caulobacter vibrioides (strain NA1000 / CB15N) (Caulobacter crescentus).